Consider the following 234-residue polypeptide: Synaptogyrin-1 (234 aa).

Methionine 1 is modified (N-acetylmethionine). The Cytoplasmic segment spans residues methionine 1–glutamine 23. The 154-residue stretch at leucine 20–glutamine 173 folds into the MARVEL domain. The chain crosses the membrane as a helical span at residues proline 24 to valine 44. The Lumenal segment spans residues asparagine 45 to glycine 71. A helical transmembrane segment spans residues valine 72–phenylalanine 92. The Cytoplasmic portion of the chain corresponds to proline 93–lysine 103. Residues alanine 104–cysteine 124 traverse the membrane as a helical segment. Topologically, residues tyrosine 125–arginine 148 are lumenal. The helical transmembrane segment at alanine 149–phenylalanine 169 threads the bilayer. Residues glutamine 170–tyrosine 234 lie on the Cytoplasmic side of the membrane. A disordered region spans residues serine 192–tyrosine 234. The span at threonine 214 to tyrosine 234 shows a compositional bias: polar residues.

It belongs to the synaptogyrin family.

It localises to the cytoplasmic vesicle. It is found in the secretory vesicle. Its subcellular location is the synaptic vesicle membrane. The protein resides in the melanosome. Functionally, may play a role in regulated exocytosis. Modulates the localization of synaptophysin/SYP into synaptic-like microvesicles and may therefore play a role in synaptic-like microvesicle formation and/or maturation. Involved in the regulation of short-term and long-term synaptic plasticity. This is Synaptogyrin-1 from Pongo abelii (Sumatran orangutan).